A 448-amino-acid polypeptide reads, in one-letter code: MCDSKDNSGVSEKCGKKFTNYPLNTTPTSLNYNLPEISKKFYNLKNKYSRNGYGLSKTEFPSSIENCPAKEYSIMYDNKDPRFLIRFLLDDGRYIIADRDDGEVFDEAPIYLDNNNHPIISRHYTGEERQKFEQVGSGDYITGEQFFQFYTQNKTRVLSNCRALDSRTILLSTAKIFPIYPPASETQLTAFVNSSFYAAAIPQLPQTSLLENIPEPTSLDDSGVLPKDAVRAVKGSALLPCIIVHDPNLNNSDKMKFNTYYLLEYKEYWHQLWSQIIPAHQTVKIQERTGISEVVQNSMIEDLNMYIGADFGMHFYLRSSGFKEQITRGLNRPLSQTTTQLGERVEEMEYYNSNDLDVRYVKYALAREFTLKRVNGEIVKNWVAVDYRLAGIQSYPNAPITNPLTLTKHTIIRCENSYDGHIFKTPLIFKNGEVIVKTNEELIPKINQ.

A beta-trefoil domain region spans residues 1–198 (MCDSKDNSGV…TAFVNSSFYA (198 aa)). A disulfide bridge links cysteine 67 with cysteine 161. A probable pore-forming domain region spans residues 199–448 (AAIPQLPQTS…NEELIPKINQ (250 aa)).

The protein belongs to the toxin_10 family. In terms of assembly, forms a heterodimer with BinA. In terms of processing, processed by proteases extracted from mosquito larval gut.

It localises to the spore. The protein resides in the perispore. In terms of biological role, component of a binary toxin active against Culex and some Aedes mosquito larvae; mortality towards both C.quinquefasciatus and A.atropalpus is maximal by 48 hours. A.aegypti is not very susceptible to this toxin. This subunit is responsible for localized binding to specific regions of the host larval gut. Binary toxin internalization into host gut cells requires both proteins. This Lysinibacillus sphaericus (Bacillus sphaericus) protein is Binary larvicide subunit BinB (binB).